We begin with the raw amino-acid sequence, 68 residues long: Large ribosomal subunit protein uL29 (68 aa).

Belongs to the universal ribosomal protein uL29 family.

In Maricaulis maris (strain MCS10) (Caulobacter maris), this protein is Large ribosomal subunit protein uL29.